Consider the following 116-residue polypeptide: Bacterial microcompartment shell protein CutR (116 aa).

The BMC circularly permuted domain occupies 10-108 (RIIQESVPGK…LEYFKNSLGF (99 aa)).

The protein belongs to the EutS/PduU family. As to quaternary structure, has been crystallized in 5 structures (all are mutated, 3 have an N-terminal His-tag), most are homohexameric with a central pore. In two the homohexamer lies flat with a beta-barrel on the flat face created by the protruding N termini of the six chains. In 2 others the hexamer is not flat but has a six-fold screw axis; the screw pitch is 33.8 or 41.9 Angstroms depending on the structure. Interacts with the BMC major shell protein.

Its subcellular location is the bacterial microcompartment. Its pathway is amine and polyamine metabolism; choline degradation. A minor shell protein of the choline degradation-specific bacterial microcompartment (BMC). Proteins such as this one with circularly permuted BMC domains may play a key role in conferring heterogeneity and flexibility in this BMC. This Streptococcus intermedius (strain ATCC 27335 / DSM 20573 / CCUG 32759 / CIP 103248 / JCM 12996 / LMG 17840 / NCTC 11324 / SK54 / 1877) protein is Bacterial microcompartment shell protein CutR.